The chain runs to 311 residues: Probable manganese-dependent inorganic pyrophosphatase (311 aa).

Mn(2+) is bound by residues histidine 9, aspartate 13, aspartate 15, aspartate 77, histidine 99, and aspartate 151.

It belongs to the PPase class C family. It depends on Mn(2+) as a cofactor.

The protein localises to the cytoplasm. It carries out the reaction diphosphate + H2O = 2 phosphate + H(+). The polypeptide is Probable manganese-dependent inorganic pyrophosphatase (Streptococcus equi subsp. zooepidemicus (strain MGCS10565)).